Reading from the N-terminus, the 361-residue chain is 3-dehydroquinate synthase (361 aa).

Residues 107–111 (GVIGD), 131–132 (TS), lysine 144, and lysine 153 each bind NAD(+). 3 residues coordinate Zn(2+): glutamate 186, histidine 251, and histidine 268.

The protein belongs to the sugar phosphate cyclases superfamily. Dehydroquinate synthase family. NAD(+) is required as a cofactor. Requires Co(2+) as cofactor. It depends on Zn(2+) as a cofactor.

It localises to the cytoplasm. It catalyses the reaction 7-phospho-2-dehydro-3-deoxy-D-arabino-heptonate = 3-dehydroquinate + phosphate. The protein operates within metabolic intermediate biosynthesis; chorismate biosynthesis; chorismate from D-erythrose 4-phosphate and phosphoenolpyruvate: step 2/7. Functionally, catalyzes the conversion of 3-deoxy-D-arabino-heptulosonate 7-phosphate (DAHP) to dehydroquinate (DHQ). In Synechocystis sp. (strain ATCC 27184 / PCC 6803 / Kazusa), this protein is 3-dehydroquinate synthase.